The sequence spans 305 residues: Sulfate adenylyltransferase subunit 2 (305 aa).

This sequence belongs to the PAPS reductase family. CysD subfamily. Heterodimer composed of CysD, the smaller subunit, and CysN.

The enzyme catalyses sulfate + ATP + H(+) = adenosine 5'-phosphosulfate + diphosphate. The protein operates within sulfur metabolism; hydrogen sulfide biosynthesis; sulfite from sulfate: step 1/3. Functionally, with CysN forms the ATP sulfurylase (ATPS) that catalyzes the adenylation of sulfate producing adenosine 5'-phosphosulfate (APS) and diphosphate, the first enzymatic step in sulfur assimilation pathway. APS synthesis involves the formation of a high-energy phosphoric-sulfuric acid anhydride bond driven by GTP hydrolysis by CysN coupled to ATP hydrolysis by CysD. This chain is Sulfate adenylyltransferase subunit 2, found in Stutzerimonas stutzeri (strain A1501) (Pseudomonas stutzeri).